The primary structure comprises 406 residues: 4-hydroxy-3-methylbut-2-en-1-yl diphosphate synthase (flavodoxin) (406 aa).

Cys297, Cys300, Cys343, and Glu350 together coordinate [4Fe-4S] cluster.

Belongs to the IspG family. As to quaternary structure, homodimer. It depends on [4Fe-4S] cluster as a cofactor.

The catalysed reaction is (2E)-4-hydroxy-3-methylbut-2-enyl diphosphate + oxidized [flavodoxin] + H2O + 2 H(+) = 2-C-methyl-D-erythritol 2,4-cyclic diphosphate + reduced [flavodoxin]. The protein operates within isoprenoid biosynthesis; isopentenyl diphosphate biosynthesis via DXP pathway; isopentenyl diphosphate from 1-deoxy-D-xylulose 5-phosphate: step 5/6. Its function is as follows. Converts 2C-methyl-D-erythritol 2,4-cyclodiphosphate (ME-2,4cPP) into 1-hydroxy-2-methyl-2-(E)-butenyl 4-diphosphate. The chain is 4-hydroxy-3-methylbut-2-en-1-yl diphosphate synthase (flavodoxin) from Thermus thermophilus (strain ATCC BAA-163 / DSM 7039 / HB27).